The chain runs to 205 residues: Glycerol-3-phosphate acyltransferase (205 aa).

Transmembrane regions (helical) follow at residues Ile4–Val24, Pro80–Phe100, Gly107–Ala127, Trp130–Ile150, and Val155–Leu175.

It belongs to the PlsY family. In terms of assembly, probably interacts with PlsX.

The protein resides in the cell inner membrane. The enzyme catalyses an acyl phosphate + sn-glycerol 3-phosphate = a 1-acyl-sn-glycero-3-phosphate + phosphate. It functions in the pathway lipid metabolism; phospholipid metabolism. Its function is as follows. Catalyzes the transfer of an acyl group from acyl-phosphate (acyl-PO(4)) to glycerol-3-phosphate (G3P) to form lysophosphatidic acid (LPA). This enzyme utilizes acyl-phosphate as fatty acyl donor, but not acyl-CoA or acyl-ACP. The protein is Glycerol-3-phosphate acyltransferase of Klebsiella pneumoniae (strain 342).